The following is a 387-amino-acid chain: Major outer membrane protein P.IA (387 aa).

The N-terminal stretch at 1–19 (MRKKLTALVLSALPLAAVA) is a signal peptide.

The protein belongs to the Gram-negative porin family. In terms of assembly, homotrimer.

It is found in the cell outer membrane. Functionally, serves as a slightly cation selective porin. Major antigen on the gonococcal cell surface and it may have pathogenic properties in addition to its porin activity. The chain is Major outer membrane protein P.IA (porA) from Neisseria meningitidis serogroup C.